Consider the following 337-residue polypeptide: Ornithine carbamoyltransferase (337 aa).

Carbamoyl phosphate is bound by residues 57–60, glutamine 84, arginine 108, and 135–138; these read STRT and HPTQ. Residues asparagine 167, aspartate 231, and 235–236 contribute to the L-ornithine site; that span reads SM. Carbamoyl phosphate contacts are provided by residues 272–273 and arginine 317; that span reads CL.

It belongs to the aspartate/ornithine carbamoyltransferase superfamily. OTCase family.

The protein localises to the cytoplasm. The catalysed reaction is carbamoyl phosphate + L-ornithine = L-citrulline + phosphate + H(+). The protein operates within amino-acid degradation; L-arginine degradation via ADI pathway; carbamoyl phosphate from L-arginine: step 2/2. In terms of biological role, reversibly catalyzes the transfer of the carbamoyl group from carbamoyl phosphate (CP) to the N(epsilon) atom of ornithine (ORN) to produce L-citrulline. This Streptococcus equi subsp. zooepidemicus (strain MGCS10565) protein is Ornithine carbamoyltransferase.